We begin with the raw amino-acid sequence, 343 residues long: Multidrug resistance protein MdtN (343 aa).

Over 1 to 12 the chain is Cytoplasmic; that stretch reads MESTPKKAPRSK. Residues 13–33 form a helical; Signal-anchor for type II membrane protein membrane-spanning segment; it reads FPALLVVALALVALVFVIWRV. At 34-343 the chain is on the periplasmic side; sequence DSAPSTNDAY…ASAVANLEPQ (310 aa).

Belongs to the membrane fusion protein (MFP) (TC 8.A.1) family. In terms of assembly, could be part of a tripartite efflux system composed of MdtN, MdtO and MdtP.

It localises to the cell inner membrane. Could be involved in resistance to puromycin, acriflavine and tetraphenylarsonium chloride. The chain is Multidrug resistance protein MdtN (mdtN) from Escherichia coli O6:H1 (strain CFT073 / ATCC 700928 / UPEC).